A 159-amino-acid chain; its full sequence is Protein-export protein SecB (159 aa).

Belongs to the SecB family. In terms of assembly, homotetramer, a dimer of dimers. One homotetramer interacts with 1 SecA dimer.

It localises to the cytoplasm. One of the proteins required for the normal export of preproteins out of the cell cytoplasm. It is a molecular chaperone that binds to a subset of precursor proteins, maintaining them in a translocation-competent state. It also specifically binds to its receptor SecA. This is Protein-export protein SecB from Aromatoleum aromaticum (strain DSM 19018 / LMG 30748 / EbN1) (Azoarcus sp. (strain EbN1)).